Reading from the N-terminus, the 56-residue chain is Large ribosomal subunit protein bL33A (56 aa).

This sequence belongs to the bacterial ribosomal protein bL33 family.

In Nocardia farcinica (strain IFM 10152), this protein is Large ribosomal subunit protein bL33A.